The sequence spans 359 residues: SAGA complex subunit Spt7 (359 aa).

In terms of assembly, component of the Spt-Ada-Gcn5 acetyltransferase (SAGA) complex consisting of wda/Taf5L, Saf6, Taf9, Taf10b, Taf12, Ada1, Spt3, Spt7, Spt20, Sf3b3, Sf3b5, Nipped-A/Tra1, a histone acetyltransferase (HAT) module made up of Gcn5, Ada2b (Isoform B), Ada3 and Sgf29, and a deubiquitinase (DUB) module made up of not/nonstop, Sgf11 and e(y)2 tethered to SAGA by Atxn7. Interacts with Ada2b; the interaction is direct.

The protein localises to the nucleus. Its function is as follows. Component of the transcription regulatory complex SAGA, a multiprotein complex that activates transcription by remodeling chromatin and mediating histone acetylation and deubiquitination. The SAGA complex predominantly acetylates histone H3. This chain is SAGA complex subunit Spt7, found in Drosophila melanogaster (Fruit fly).